Reading from the N-terminus, the 1904-residue chain is Voltage-dependent calcium channel type A subunit alpha-1 (1904 aa).

The disordered stretch occupies residues 1–45 (MLGGVGGRHMSTRRRGSSPLVRGGAGLTGYAGPGASGNSNDVAAI). Positions 23–35 (GGAGLTGYAGPGA) are enriched in gly residues. Residues 30–168 (YAGPGASGNS…KHTRFIIEWP (139 aa)) lie on the Cytoplasmic side of the membrane. Residues 155–447 (NCIRKHTRFI…LVLGVLSGEF (293 aa)) form an I repeat. The chain crosses the membrane as a helical span at residues 169-187 (PFEYAVLLTIIANCVVLAL). Residues 188–205 (EEHLPKQDKTILAQKLEA) are Extracellular-facing. The chain crosses the membrane as a helical span at residues 206–225 (TEIYFLGIFCVEASLKILAL). The Cytoplasmic portion of the chain corresponds to 226 to 237 (GFVLHRGSYLRN). Residues 238–259 (IWNIMDFFVVVTGFITAFSQGI) traverse the membrane as a helical segment. Over 260 to 264 (ELDMD) the chain is Extracellular. Residues 265–283 (LRTLRAIRVLRPLKLVSGI) traverse the membrane as a helical segment. At 284–302 (PSLQVVLKSIIKAMAPLLQ) the chain is on the cytoplasmic side. A helical transmembrane segment spans residues 303-322 (IGLLVLFAIVIFAIIGLEFY). At 323–419 (SGTLHKTCYS…WTNDALGSTY (97 aa)) the chain is on the extracellular side. Residues asparagine 353 and asparagine 367 are each glycosylated (N-linked (GlcNAc...) asparagine). The chain crosses the membrane as a helical span at residues 420–444 (NWIYFIPLIVLGSFFMLNLVLGVLS). Topologically, residues 445–568 (GEFAKEREKV…YWIRKSVKSQ (124 aa)) are cytoplasmic. Residues 513–543 (KKLGKSKSTDTEEEEGDDDQDDGELSSSTKE) form a disordered region. Positions 523–536 (TEEEEGDDDQDDGE) are enriched in acidic residues. An II repeat occupies 554-797 (EKRFRYWIRK…VFLAIAVDNL (244 aa)). A helical membrane pass occupies residues 569-587 (KFYWFVIVLVFFNTVCVAV). Residues 588-602 (EHYGQPQWLTDFLYF) lie on the Extracellular side of the membrane. A helical transmembrane segment spans residues 603-622 (AEFVFLALFMLEMFIKVYAL). Residues 623–630 (GPRTYFDS) are Cytoplasmic-facing. A helical membrane pass occupies residues 631-649 (SFNRFDCVVISGSIFEVIW). Topologically, residues 650–658 (SEVKSGSFG) are extracellular. The helical transmembrane segment at 659 to 677 (LSVLRALRLLRIFKVTKYW) threads the bilayer. At 678-696 (KSLRNLVISLLSSMRSIIS) the chain is on the cytoplasmic side. Residues 697-716 (LLFLLFLFILIFALLGMQLF) traverse the membrane as a helical segment. At 717-769 (GGQFNFDSGTPPTNFNTFPIALLTVFQILTGEDWNEVMYQGIESQGGHKKGMI) the chain is on the extracellular side. The helical transmembrane segment at 770–794 (YSLYFIVLVLFGNYTLLNVFLAIAV) threads the bilayer. Topologically, residues 795-895 (DNLANAQELS…VRRAAHWVVN (101 aa)) are cytoplasmic. A disordered region spans residues 827–869 (QSLQNPKDGGAPKVEICPPNGKGGKQSSEEEKKQDEDDDTGPK). The III repeat unit spans residues 890-1177 (AHWVVNLRYF…IITFQEQGEA (288 aa)). Residues 896 to 914 (LRYFDFFIMVVISLSSIAL) form a helical membrane-spanning segment. Over 915 to 930 (AAEDPVWEDSPRNEVL) the chain is Extracellular. The chain crosses the membrane as a helical span at residues 931 to 950 (NYFDYAFTGVFTVEMILKII). Residues 951-962 (DLGIILHPGSYL) lie on the Cytoplasmic side of the membrane. The chain crosses the membrane as a helical span at residues 963–981 (REFWNIMDAVVVICAAVSF). Over 982-994 (AFDMTGSSAGQNL) the chain is Extracellular. An N-linked (GlcNAc...) asparagine glycan is attached at asparagine 993. Residues 995–1013 (STIKSLRVLRVLRPLKTIK) traverse the membrane as a helical segment. At 1014–1032 (RVPKLKAVFDCVVNSLKNV) the chain is on the cytoplasmic side. The helical transmembrane segment at 1033–1052 (INILIVYILFQFIFAVIAVQ) threads the bilayer. The Extracellular portion of the chain corresponds to 1053–1141 (LFNGKFFYCS…EDKGPIQNFR (89 aa)). A helical transmembrane segment spans residues 1142–1166 (IEMSIFYIVYFIVFPFFFVNIFVAL). At 1167–1221 (IIITFQEQGEAELQDGEIDKNQKSCIDFTIQARPLERYMPKERNSVKYKIWRIVV) the chain is on the cytoplasmic side. One copy of the IV repeat lies at 1214–1470 (YKIWRIVVST…DNFDYLTRDS (257 aa)). A helical membrane pass occupies residues 1222–1250 (STPFEYFIMGLIVLNTVLLMMKFHRQSDA). Over 1251 to 1255 (YKNTL) the chain is Extracellular. Residues 1256 to 1275 (KYMNMCFTGMFTVECILKIA) form a helical membrane-spanning segment. Topologically, residues 1276 to 1283 (AFGVRNFF) are cytoplasmic. The chain crosses the membrane as a helical span at residues 1284–1302 (KDAWNTFDFITVIGSIVDA). The Extracellular segment spans residues 1303 to 1309 (LVIEFGE). The chain crosses the membrane as a helical span at residues 1310–1328 (NFINVGFLRLFRAARLIKL). At 1329–1347 (LRQGYTIRILLWTFVQSFK) the chain is on the cytoplasmic side. A helical transmembrane segment spans residues 1348 to 1367 (ALPYVCLLIAMLFFIYAIIG). The Extracellular segment spans residues 1368-1431 (MQVFGNIALD…AKAGKQEGGC (64 aa)). The tract at residues 1430-1471 (GCGSNIAYAYFVSFIFFCSFLMLNLFVAVIMDNFDYLTRDSS) is phenylalkylamine binding. The chain crosses the membrane as a helical span at residues 1432–1456 (GSNIAYAYFVSFIFFCSFLMLNLFV). Over 1457-1904 (AVIMDNFDYL…HSDSDEDDWC (448 aa)) the chain is Cytoplasmic. In terms of domain architecture, EF-hand spans 1476–1511 (HHLDEFVRIWAEYDPNATGKIHYTEMYDMLKNMDPP). Aspartate 1489, asparagine 1491, threonine 1493, lysine 1495, and glutamate 1500 together coordinate Ca(2+). Disordered stretches follow at residues 1652-1694 (THTG…HEGP), 1710-1788 (THHP…HSYP), and 1870-1904 (GGRLLPSPVPNGYKPQPQAKQRTPRHSDSDEDDWC). Residues 1670–1681 (RSPSLRHSPGRP) are compositionally biased toward low complexity. The segment covering 1682–1691 (GYDHHGHYYH) has biased composition (basic and acidic residues). Basic residues predominate over residues 1710 to 1725 (THHPHPSQYNHRHRMR). Over residues 1727–1740 (PWSASTSPARTPSP) the composition is skewed to low complexity. Polar residues predominate over residues 1751-1762 (GTTSLEQRSRSP). Basic residues predominate over residues 1771 to 1784 (PHTHQHYHRHHPHQ).

This sequence belongs to the calcium channel alpha-1 subunit (TC 1.A.1.11) family. CACNA1I subfamily. Interacts with CATSPER1 and CATSPER2, leading to suppress T-type calcium channel activity.

The protein localises to the membrane. Functionally, voltage-sensitive calcium channels (VSCC) mediate the entry of calcium ions into excitable cells and are also involved in a variety of calcium-dependent processes, including muscle contraction, neurotransmitter release, gene expression, cell motility, cell division and cell death. The chain is Voltage-dependent calcium channel type A subunit alpha-1 (CAC) from Apis mellifera (Honeybee).